Consider the following 156-residue polypeptide: Ribosomal RNA large subunit methyltransferase H (156 aa).

S-adenosyl-L-methionine is bound by residues leucine 73, glycine 104, and 123 to 128; that span reads ISSMTL.

It belongs to the RNA methyltransferase RlmH family. In terms of assembly, homodimer.

Its subcellular location is the cytoplasm. The enzyme catalyses pseudouridine(1915) in 23S rRNA + S-adenosyl-L-methionine = N(3)-methylpseudouridine(1915) in 23S rRNA + S-adenosyl-L-homocysteine + H(+). Its function is as follows. Specifically methylates the pseudouridine at position 1915 (m3Psi1915) in 23S rRNA. The chain is Ribosomal RNA large subunit methyltransferase H from Burkholderia multivorans (strain ATCC 17616 / 249).